The primary structure comprises 259 residues: Ribosomal RNA large subunit methyltransferase E (259 aa).

S-adenosyl-L-methionine-binding residues include G58, W60, D78, D96, and D120. The active-site Proton acceptor is K160.

It belongs to the class I-like SAM-binding methyltransferase superfamily. RNA methyltransferase RlmE family.

The protein localises to the cytoplasm. The enzyme catalyses uridine(2552) in 23S rRNA + S-adenosyl-L-methionine = 2'-O-methyluridine(2552) in 23S rRNA + S-adenosyl-L-homocysteine + H(+). Its function is as follows. Specifically methylates the uridine in position 2552 of 23S rRNA at the 2'-O position of the ribose in the fully assembled 50S ribosomal subunit. The chain is Ribosomal RNA large subunit methyltransferase E from Methanococcus vannielii (strain ATCC 35089 / DSM 1224 / JCM 13029 / OCM 148 / SB).